We begin with the raw amino-acid sequence, 356 residues long: 45 kDa calcium-binding protein (356 aa).

The N-terminal stretch at M1–A29 is a signal peptide. N-linked (GlcNAc...) asparagine glycosylation occurs at N33. EF-hand domains are found at residues K92–E127, E131–L166, M227–N262, W272–Y307, and N308–S343. 24 residues coordinate Ca(2+): D105, D107, D109, K111, E116, D144, D146, D148, H150, E155, D240, D242, D244, K246, E251, D285, N287, D289, E296, D321, N323, N325, H327, and E332.

It belongs to the CREC family.

It is found in the golgi apparatus lumen. Its function is as follows. May regulate calcium-dependent activities in the endoplasmic reticulum lumen or post-ER compartment. The chain is 45 kDa calcium-binding protein (SDF4) from Gallus gallus (Chicken).